The sequence spans 236 residues: UPF0173 metal-dependent hydrolase DSY1309 (236 aa).

This sequence belongs to the UPF0173 family.

The protein is UPF0173 metal-dependent hydrolase DSY1309 of Desulfitobacterium hafniense (strain Y51).